Reading from the N-terminus, the 320-residue chain is Sensor histidine kinase YbdK (320 aa).

A helical transmembrane segment spans residues 1–21 (MLLFTAVISVPMLLLAVSVLM). The Extracellular segment spans residues 22–41 (SVIYDSMFKPMNHGMPFHRS). Residues 42-62 (FAYPAMIVVFLISLLLLAFLF) form a helical membrane-spanning segment. Over 63-320 (SKSIHSLLHK…NGTGFLFSKE (258 aa)) the chain is Cytoplasmic. Positions 67 to 120 (HSLLHKINLLNQTIRHLASDQRVPDKIEVKRADEIGELIKSVNLLIERTTYREL) constitute an HAMP domain. The region spanning 135-320 (KLRHDINTPL…NGTGFLFSKE (186 aa)) is the Histidine kinase domain. His138 bears the Phosphohistidine; by autocatalysis mark.

It localises to the cell membrane. It carries out the reaction ATP + protein L-histidine = ADP + protein N-phospho-L-histidine.. Member of the two-component regulatory system YbdK/YbdJ. Probably activates YbdJ by phosphorylation. The sequence is that of Sensor histidine kinase YbdK (ybdK) from Bacillus subtilis (strain 168).